A 791-amino-acid chain; its full sequence is DNA repair and recombination protein RAD54-like (791 aa).

The span at 1–20 shows a compositional bias: polar residues; it reads MRRSLAPSQRIGQSTASRNA. Positions 1-53 are disordered; that stretch reads MRRSLAPSQRIGQSTASRNAFTPPLLQKKNKRACQKDLRLDTDADEDKERKRF. The required for chromatin remodeling, strand pairing activities and coupling of ATPase activity stretch occupies residues 2–9; that stretch reads RRSLAPSQ. Thr22 is modified (phosphothreonine). Basic and acidic residues predominate over residues 34 to 53; that stretch reads CQKDLRLDTDADEDKERKRF. Residues 175–349 enclose the Helicase ATP-binding domain; it reads EGKKGDFNGC…FSLVNFVNPE (175 aa). 188–195 is a binding site for ATP; sequence DEMGLGKT. The short motif at 300–303 is the DEGH box element; sequence DEGH. In terms of domain architecture, Helicase C-terminal spans 506-663; that stretch reads LLDFMLAAIR…NNESSEKHFT (158 aa). The segment at 747 to 791 is disordered; sequence KEVVESPESAAAEAESVEEESQPTQRKRPSPPLSDDSADEDFIGF. The span at 782-791 shows a compositional bias: acidic residues; it reads DSADEDFIGF.

This sequence belongs to the SNF2/RAD54 helicase family. Interacts (via N-terminus) with spn-A/Rad51.

Its subcellular location is the nucleus. Functionally, involved in mitotic DNA repair and meiotic recombination. Functions in the recombinational DNA repair pathway. Essential for interhomolog gene conversion (GC), but may have a less important role in intersister GC than spn-A/Rad51. In the presence of DNA, spn-A/Rad51 enhances the ATPase activity of okr/Rad54. The polypeptide is DNA repair and recombination protein RAD54-like (Drosophila ananassae (Fruit fly)).